We begin with the raw amino-acid sequence, 90 residues long: DNA-directed RNA polymerase subunit omega (90 aa).

Residues 69 to 90 (RQEQQEQEAAELAAVSSIARNR) are disordered.

This sequence belongs to the RNA polymerase subunit omega family. As to quaternary structure, the RNAP catalytic core consists of 2 alpha, 1 beta, 1 beta' and 1 omega subunit. When a sigma factor is associated with the core the holoenzyme is formed, which can initiate transcription.

The catalysed reaction is RNA(n) + a ribonucleoside 5'-triphosphate = RNA(n+1) + diphosphate. Functionally, promotes RNA polymerase assembly. Latches the N- and C-terminal regions of the beta' subunit thereby facilitating its interaction with the beta and alpha subunits. In Vibrio vulnificus (strain CMCP6), this protein is DNA-directed RNA polymerase subunit omega.